We begin with the raw amino-acid sequence, 123 residues long: Small ribosomal subunit protein uS13 (123 aa).

Residues 95-123 form a disordered region; sequence GLPVRGQRTKTNARTRKGPARTVAGKKKK.

This sequence belongs to the universal ribosomal protein uS13 family. Part of the 30S ribosomal subunit. Forms a loose heterodimer with protein S19. Forms two bridges to the 50S subunit in the 70S ribosome.

Located at the top of the head of the 30S subunit, it contacts several helices of the 16S rRNA. In the 70S ribosome it contacts the 23S rRNA (bridge B1a) and protein L5 of the 50S subunit (bridge B1b), connecting the 2 subunits; these bridges are implicated in subunit movement. Contacts the tRNAs in the A and P-sites. This is Small ribosomal subunit protein uS13 from Heliobacterium modesticaldum (strain ATCC 51547 / Ice1).